The sequence spans 341 residues: Ribosomal RNA small subunit methyltransferase C (341 aa).

It belongs to the methyltransferase superfamily. RsmC family. As to quaternary structure, monomer.

It is found in the cytoplasm. It catalyses the reaction guanosine(1207) in 16S rRNA + S-adenosyl-L-methionine = N(2)-methylguanosine(1207) in 16S rRNA + S-adenosyl-L-homocysteine + H(+). Functionally, specifically methylates the guanine in position 1207 of 16S rRNA in the 30S particle. In Shewanella pealeana (strain ATCC 700345 / ANG-SQ1), this protein is Ribosomal RNA small subunit methyltransferase C.